A 484-amino-acid polypeptide reads, in one-letter code: Glutamyl-tRNA(Gln) amidotransferase subunit A (484 aa).

Catalysis depends on charge relay system residues Lys-76 and Ser-151. The active-site Acyl-ester intermediate is the Ser-175.

This sequence belongs to the amidase family. GatA subfamily. In terms of assembly, heterotrimer of A, B and C subunits.

The enzyme catalyses L-glutamyl-tRNA(Gln) + L-glutamine + ATP + H2O = L-glutaminyl-tRNA(Gln) + L-glutamate + ADP + phosphate + H(+). Functionally, allows the formation of correctly charged Gln-tRNA(Gln) through the transamidation of misacylated Glu-tRNA(Gln) in organisms which lack glutaminyl-tRNA synthetase. The reaction takes place in the presence of glutamine and ATP through an activated gamma-phospho-Glu-tRNA(Gln). This Cellvibrio japonicus (strain Ueda107) (Pseudomonas fluorescens subsp. cellulosa) protein is Glutamyl-tRNA(Gln) amidotransferase subunit A.